A 315-amino-acid polypeptide reads, in one-letter code: Energy-coupling factor transporter ATP-binding protein EcfA2 (315 aa).

Residues 31–275 (IILDNVSYTY…QELLSKIQIE (245 aa)) form the ABC transporter domain. Residue 68–75 (GTTGSGKS) coordinates ATP.

This sequence belongs to the ABC transporter superfamily. Energy-coupling factor EcfA family. As to quaternary structure, forms a stable energy-coupling factor (ECF) transporter complex composed of 2 membrane-embedded substrate-binding proteins (S component), 2 ATP-binding proteins (A component) and 2 transmembrane proteins (T component).

It localises to the cell membrane. In terms of biological role, ATP-binding (A) component of a common energy-coupling factor (ECF) ABC-transporter complex. Unlike classic ABC transporters this ECF transporter provides the energy necessary to transport a number of different substrates. The chain is Energy-coupling factor transporter ATP-binding protein EcfA2 from Mesoplasma florum (strain ATCC 33453 / NBRC 100688 / NCTC 11704 / L1) (Acholeplasma florum).